We begin with the raw amino-acid sequence, 452 residues long: Methionine aminopeptidase 2 (452 aa).

Positions 1–91 (MTGVTGTEDT…KNKKKKKKKI (91 aa)) are disordered. Basic and acidic residues predominate over residues 8 to 38 (EDTKVIESKINELNIDKSKPEKTNKVNKSDD). The span at 39–62 (VDNDDVDNDDNDDEDNDDDDDEIT) shows a compositional bias: acidic residues. Over residues 74-91 (KKKKKNKNKNKKKKKKKI) the composition is skewed to basic residues. His203 is a substrate binding site. Asp223, Asp234, and His305 together coordinate a divalent metal cation. Residue His313 coordinates substrate. Residues Glu338 and Glu433 each coordinate a divalent metal cation.

Belongs to the peptidase M24A family. Methionine aminopeptidase eukaryotic type 2 subfamily. Co(2+) is required as a cofactor. It depends on Zn(2+) as a cofactor. The cofactor is Mn(2+). Requires Fe(2+) as cofactor.

The protein resides in the cytoplasm. It carries out the reaction Release of N-terminal amino acids, preferentially methionine, from peptides and arylamides.. In terms of biological role, cotranslationally removes the N-terminal methionine from nascent proteins. The N-terminal methionine is often cleaved when the second residue in the primary sequence is small and uncharged (Met-Ala-, Cys, Gly, Pro, Ser, Thr, or Val). In Candida dubliniensis (strain CD36 / ATCC MYA-646 / CBS 7987 / NCPF 3949 / NRRL Y-17841) (Yeast), this protein is Methionine aminopeptidase 2.